Here is a 272-residue protein sequence, read N- to C-terminus: Zinc transporter ZupT (272 aa).

The next 8 membrane-spanning stretches (helical) occupy residues 11–31, 40–60, 76–96, 126–146, 158–178, 189–209, 211–231, and 250–270; these read IALA…LMVV, LLAF…LTEI, LGFT…MVID, LMTA…TFFA, AFAI…PVYF, ASLL…LALF, VLSD…MVFL, and VYGL…FRFA. Residues Asn-136 and Glu-139 each coordinate Fe(2+). Zn(2+)-binding residues include Glu-139 and His-164. Asn-165, Glu-168, and Glu-197 together coordinate Fe(2+). Glu-168 serves as a coordination point for Zn(2+).

This sequence belongs to the ZIP transporter (TC 2.A.5) family. ZupT subfamily.

The protein localises to the cell inner membrane. It catalyses the reaction Zn(2+)(in) = Zn(2+)(out). Its function is as follows. Mediates zinc uptake. May also transport other divalent cations. This chain is Zinc transporter ZupT, found in Xanthomonas axonopodis pv. citri (strain 306).